A 151-amino-acid chain; its full sequence is Small ribosomal subunit protein uS15 (151 aa).

This sequence belongs to the universal ribosomal protein uS15 family.

This is Small ribosomal subunit protein uS15 (RPS13) from Pisum sativum (Garden pea).